Reading from the N-terminus, the 486-residue chain is MEVTAHYIGGKPFVGDTGESFATLNPATGEVLAHIEQADERVLGHAIESAKLGFSVWSSMSAAERSRCLLKAAQLIRDHNDELAELEVRDTGKPIQEASVVDIATGADVIEYFAGLVNGLGGEQQSLGSNQFFYTRREPLGICAGIGAWNYPIQIAMWKAAPALAAGNAMIFKPSEETPLSALKLAELFTQAGVPDGVFNVVQGDYRVGQMLTAHPEIDKVSFTGESGTGKKVMADSAATLKPVTMELGGKSPLIIFDDADLDDAVSAAMVANFYTQGEVCTHGTRVYVQRAMYDAFVEQLKERTEKLIVGDPMNMETQIGSLISKSHLEKVLGAISSAKESGATLLTGGFQVTERGLEKGCFVAPTVFVDCRDEMPHVQNEIFGPVMSVLVFDDEDEVIARANNTQYGLAAGVFTQNLSKAHRVIHQLQAGICWINTWGNSPAEMPVGGYKLSGIGRENGQETLLHYTQTKSVFVELGAFDSPYA.

2 residues coordinate K(+): Thr-23 and Asp-90. 147–149 (GAW) provides a ligand contact to NAD(+). Lys-159 acts as the Charge relay system in catalysis. Residues 173-176 (KPSE) and 226-229 (ESGT) contribute to the NAD(+) site. Leu-241 contacts K(+). Glu-247 acts as the Proton acceptor in catalysis. The NAD(+) site is built by Gly-249, Cys-281, and Glu-382. Cys-281 acts as the Nucleophile in catalysis. Cys-281 carries the cysteine sulfenic acid (-SOH) modification. K(+)-binding residues include Lys-452 and Gly-455. Glu-459 serves as the catalytic Charge relay system.

The protein belongs to the aldehyde dehydrogenase family. In terms of assembly, dimer of dimers. The cofactor is K(+).

The catalysed reaction is betaine aldehyde + NAD(+) + H2O = glycine betaine + NADH + 2 H(+). It functions in the pathway amine and polyamine biosynthesis; betaine biosynthesis via choline pathway; betaine from betaine aldehyde: step 1/1. In terms of biological role, involved in the biosynthesis of the osmoprotectant glycine betaine. Catalyzes the irreversible oxidation of betaine aldehyde to the corresponding acid. The polypeptide is Betaine aldehyde dehydrogenase (Vibrio vulnificus (strain CMCP6)).